Here is a 441-residue protein sequence, read N- to C-terminus: UDP-N-acetylmuramoylalanine--D-glutamate ligase (441 aa).

113-119 (GSNAKST) serves as a coordination point for ATP.

Belongs to the MurCDEF family.

It is found in the cytoplasm. It catalyses the reaction UDP-N-acetyl-alpha-D-muramoyl-L-alanine + D-glutamate + ATP = UDP-N-acetyl-alpha-D-muramoyl-L-alanyl-D-glutamate + ADP + phosphate + H(+). The protein operates within cell wall biogenesis; peptidoglycan biosynthesis. Its function is as follows. Cell wall formation. Catalyzes the addition of glutamate to the nucleotide precursor UDP-N-acetylmuramoyl-L-alanine (UMA). The chain is UDP-N-acetylmuramoylalanine--D-glutamate ligase from Alcanivorax borkumensis (strain ATCC 700651 / DSM 11573 / NCIMB 13689 / SK2).